The primary structure comprises 770 residues: Amyloid-beta precursor protein (770 aa).

Residues 1-17 (MLPGLALVLLAAWTARA) form the signal peptide. The Extracellular portion of the chain corresponds to 18 to 701 (LEVPTDGNAG…AEDVGSNKGA (684 aa)). Residues 28–123 (LLAEPQVAMF…PYRCLVGEFV (96 aa)) form a GFLD subdomain region. The E1 domain maps to 28–189 (LLAEPQVAMF…RGVEFVCCPL (162 aa)). 6 disulfide bridges follow: Cys38–Cys62, Cys73–Cys117, Cys98–Cys105, Cys133–Cys187, Cys144–Cys174, and Cys158–Cys186. 96-110 (NWCKRSRKQCKTHTH) is a binding site for heparin. The tract at residues 131–189 (DKCKFLHQERMDVCETHLHWHTVAKETCSEKSTNLHDYGMLLPCGIDKFRGVEFVCCPL) is cuBD subdomain. The tract at residues 135-155 (FLHQERMDVCETHLHWHTVAK) is copper-binding. Residues His147, His151, and Tyr168 each coordinate Cu(2+). The segment at 181-188 (GVEFVCCP) is zinc-binding. 3 residues coordinate Zn(2+): Glu183, Cys186, and Cys187. Positions 196 to 207 (IDSADAEEDDSD) are enriched in acidic residues. Residues 196 to 284 (IDSADAEEDD…TTTTTTESVE (89 aa)) form a disordered region. The residue at position 198 (Ser198) is a Phosphoserine; by CK2. A Phosphoserine; by CK1 modification is found at Ser206. Sulfotyrosine is present on residues Tyr217 and Tyr262. Over residues 228 to 264 (VAEEEEVADVEEEEAEDDEDDEDGDEVEEEAEEPYEE) the composition is skewed to acidic residues. Positions 268–281 (RTTSIATTTTTTTE) are enriched in low complexity. Disulfide bonds link Cys291/Cys341, Cys300/Cys324, and Cys316/Cys337. Residues 291 to 341 (CSEQAETGPCRAMISRWYFDVTEGKCAPFFYGGCGGNRNNFDTEEYCMAVC) form the BPTI/Kunitz inhibitor domain. At Tyr336 the chain carries Sulfotyrosine. Positions 344–365 (VMSQSLLKTTQEHLPQDPVKLP) match the OX-2 motif. An E2 domain is found at 374 to 565 (AVDKYLETPG…EEIQDEVDEL (192 aa)). Residues 391-423 (FQKAKERLEAKHRERMSQVMREWEEAERQAKNL) form a heparin-binding region. At Ser441 the chain carries Phosphoserine. The tract at residues 491 to 522 (FNMLKKYVRAEQKDRQHTLKHFEHVRMVDPKK) is heparin-binding. At Tyr497 the chain carries Phosphotyrosine. The collagen-binding stretch occupies residues 523–540 (AAQIRSQVMTHLRVIYER). 2 N-linked (GlcNAc...) asparagine glycosylation sites follow: Asn542 and Asn571. Cu(2+) contacts are provided by His677, Tyr681, His684, and His685. Residues His677, Tyr681, His684, and His685 each coordinate Zn(2+). Residues 695-722 (VGSNKGAIIGLMVGGVVIATVIVITLVM) form an interaction with PSEN1 region. The helical transmembrane segment at 702–722 (IIGLMVGGVVIATVIVITLVM) threads the bilayer. The Cytoplasmic segment spans residues 723–770 (LKKKQYTSIHHGVVEVDAAVTPEERHLSKMQQNGYENPTYKFFEQMQN). The Basolateral sorting signal motif lies at 724 to 734 (KKKQYTSIHHG). Thr729 bears the Phosphothreonine mark. Ser730 bears the Phosphoserine; by APP-kinase I mark. The segment at 732–751 (HHGVVEVDAAVTPEERHLSK) is interaction with G(o)-alpha. Position 743 is a phosphothreonine; by CDK5 and MAPK10 (Thr743). Positions 756–770 (GYENPTYKFFEQMQN) are required for the interaction with KIF5B and for anterograde transport in axons. Phosphotyrosine; by ABL1 is present on Tyr757. Positions 757–762 (YENPTY) match the YENPXY motif; contains endocytosis signal motif. Lys763 is covalently cross-linked (Glycyl lysine isopeptide (Lys-Gly) (interchain with G-Cter in ubiquitin)).

It belongs to the APP family. Binds, via its C-terminus, to the PID domain of several cytoplasmic proteins, including APBB family members, the APBA family, MAPK8IP1, SHC1 and NUMB and DAB1. Binding to DAB1 inhibits its serine phosphorylation. Interacts (via NPXY motif) with DAB2 (via PID domain); the interaction is impaired by tyrosine phosphorylation of the NPXY motif. Also interacts with GPCR-like protein BPP, APPBP1, IB1, KNS2 (via its TPR domains), APPBP2 (via BaSS) and DDB1. In vitro, it binds MAPT via the MT-binding domains. Associates with microtubules in the presence of ATP and in a kinesin-dependent manner. Interacts, through a C-terminal domain, with GNAO1. Amyloid-beta protein 42 binds CHRNA7 in hippocampal neurons. Amyloid-beta associates with HADH2. Interacts with CPEB1, ANKS1B and AGER. Interacts with ITM2B. Interacts with ITM2C. Interacts with IDE. Can form homodimers; dimerization is enhanced in the presence of Cu(2+) ions. Can form homodimers; this is promoted by heparin binding. Amyloid-beta protein 40 interacts with S100A9. CTF-alpha product of APP interacts with GSAP. Interacts with SORL1 (via N-terminal ectodomain); this interaction retains APP in the trans-Golgi network and reduces processing into soluble APP-alpha and amyloid-beta peptides. The C99 fragment also interacts with SORL1. Interacts with PLD3. Interacts with VDAC1. Interacts with NSG1; could regulate APP processing. Amyloid-beta protein 42 interacts with FPR2. Interacts (via transmembrane region) with PSEN1; the interaction is direct. Interacts with LRRK2. Interacts (via cytoplasmic domain) with KIF5B. Interacts (via C-terminus) with APBB2/FE65L1 (via C-terminus). Interacts (via intracellular domain) with APBB3. Post-translationally, proteolytically processed under normal cellular conditions. Cleavage either by alpha-secretase, beta-secretase or theta-secretase leads to generation and extracellular release of soluble APP peptides, S-APP-alpha and S-APP-beta, and the retention of corresponding membrane-anchored C-terminal fragments, C80, C83 and C99. Subsequent processing of C80 and C83 by gamma-secretase yields P3 peptides. This is the major secretory pathway and is non-amyloidogenic. Alternatively, presenilin/nicastrin-mediated gamma-secretase processing of C99 releases the amyloid-beta proteins, amyloid-beta protein 40 and amyloid-beta protein 42, major components of amyloid plaques, and the cytotoxic C-terminal fragments, gamma-CTF(50), gamma-CTF(57) and gamma-CTF(59). PSEN1 cleavage is more efficient with C83 than with C99 as substrate (in vitro). Amyloid-beta protein 40 and Amyloid-beta protein 42 are cleaved by ACE. Many other minor amyloid-beta peptides, amyloid-beta 1-X peptides, are found in cerebral spinal fluid (CSF) including the amyloid-beta X-15 peptides, produced from the cleavage by alpha-secretase. In terms of processing, proteolytically cleaved by caspases during neuronal apoptosis. Cleavage at Asp-739 by either caspase-3, -8 or -9 results in the production of the neurotoxic C31 peptide and the increased production of amyloid-beta peptides. N- and O-glycosylated. Post-translationally, phosphorylation in the C-terminal on tyrosine, threonine and serine residues is neuron-specific. Phosphorylation can affect APP processing, neuronal differentiation and interaction with other proteins. Phosphorylated on Thr-743 in neuronal cells by Cdc5 kinase and Mapk10, in dividing cells by Cdc2 kinase in a cell-cycle dependent manner with maximal levels at the G2/M phase and, in vitro, by GSK-3-beta. The Thr-743 phosphorylated form causes a conformational change which reduces binding of Fe65 family members. In dopaminergic (DA) neurons, phosphorylation on Thr-743 by LRKK2 promotes the production and the nuclear translocation of the APP intracellular domain (AICD) which induces DA neuron apoptosis. Phosphorylation on Tyr-757 is required for SHC binding. Phosphorylated in the extracellular domain by casein kinases on both soluble and membrane-bound APP. This phosphorylation is inhibited by heparin. In terms of processing, extracellular binding and reduction of copper, results in a corresponding oxidation of Cys-144 and Cys-158, and the formation of a disulfide bond. Trophic-factor deprivation triggers the cleavage of surface APP by beta-secretase to release sAPP-beta which is further cleaved to release an N-terminal fragment of APP (N-APP). Post-translationally, amyloid-beta peptides are degraded by IDE. In terms of processing, sulfated on tyrosine residues.

The protein localises to the cell membrane. Its subcellular location is the membrane. It is found in the perikaryon. It localises to the cell projection. The protein resides in the growth cone. The protein localises to the clathrin-coated pit. Its subcellular location is the early endosome. It is found in the cytoplasmic vesicle. It localises to the endoplasmic reticulum. The protein resides in the golgi apparatus. The protein localises to the secreted. Its subcellular location is the cell surface. It is found in the nucleus. It localises to the cytoplasm. Functions as a cell surface receptor and performs physiological functions on the surface of neurons relevant to neurite growth, neuronal adhesion and axonogenesis. Interaction between APP molecules on neighboring cells promotes synaptogenesis. Involved in cell mobility and transcription regulation through protein-protein interactions. Can promote transcription activation through binding to APBB1-KAT5 and inhibit Notch signaling through interaction with Numb. Couples to apoptosis-inducing pathways such as those mediated by G(o) and JIP. Inhibits G(o)-alpha ATPase activity. Acts as a kinesin I membrane receptor, mediating the axonal transport of beta-secretase and presenilin 1. By acting as a kinesin I membrane receptor, plays a role in axonal anterograde transport of cargo towards synapses in axons. May be involved in copper homeostasis/oxidative stress through copper ion reduction. In vitro, copper-metallated APP induces neuronal death directly or is potentiated through Cu(2+)-mediated low-density lipoprotein oxidation. Can regulate neurite outgrowth through binding to components of the extracellular matrix such as heparin and collagen I and IV. Induces a AGER-dependent pathway that involves activation of p38 MAPK, resulting in internalization of amyloid-beta peptide and mitochondrial dysfunction in cultured cortical neurons. Provides Cu(2+) ions for GPC1 which are required for release of nitric oxide (NO) and subsequent degradation of the heparan sulfate chains on GPC1. In terms of biological role, amyloid-beta peptides are lipophilic metal chelators with metal-reducing activity. Binds transient metals such as copper, zinc and iron. Its function is as follows. The gamma-CTF peptides as well as the caspase-cleaved peptides, including C31, are potent enhancers of neuronal apoptosis. The polypeptide is Amyloid-beta precursor protein (Sus scrofa (Pig)).